A 674-amino-acid chain; its full sequence is Translation factor GUF1, mitochondrial (674 aa).

The transit peptide at 1–48 directs the protein to the mitochondrion; sequence MRGCLQPARWLTTATLRRPLLSCPRQLPTRYNPFPRPFHHAPVLQARQ. The 181-residue stretch at 66–246 folds into the tr-type G domain; the sequence is ERYRNFCIVA…AIIESIPALL (181 aa). GTP is bound by residues 75–82, 139–143, and 193–196; these read AHVDHGKS, DTPGH, and NKVD.

The protein belongs to the TRAFAC class translation factor GTPase superfamily. Classic translation factor GTPase family. LepA subfamily.

The protein resides in the mitochondrion inner membrane. It carries out the reaction GTP + H2O = GDP + phosphate + H(+). Promotes mitochondrial protein synthesis. May act as a fidelity factor of the translation reaction, by catalyzing a one-codon backward translocation of tRNAs on improperly translocated ribosomes. Binds to mitochondrial ribosomes in a GTP-dependent manner. In Arthroderma otae (strain ATCC MYA-4605 / CBS 113480) (Microsporum canis), this protein is Translation factor GUF1, mitochondrial.